The chain runs to 204 residues: Putative t-SNARE coiled-coil homology domain-containing protein L657 (204 aa).

T-SNARE coiled-coil homology domains are found at residues 9-71 and 140-202; these read SDYY…MDHV and DNSR…IKHT. Positions 159 to 181 form a coiled coil; sequence VLEKQANDISNILDEQNNTLEII.

In Acanthamoeba polyphaga (Amoeba), this protein is Putative t-SNARE coiled-coil homology domain-containing protein L657.